The primary structure comprises 535 residues: Alkaline phosphatase, placental type (535 aa).

Residues 1–22 (MLGPCMLLLLLLLGLRLQLSLG) form the signal peptide. A Mg(2+)-binding site is contributed by Asp-64. Residues Asp-64 and Ser-114 each contribute to the Zn(2+) site. The Phosphoserine intermediate role is filled by Ser-114. Cys-143 and Cys-205 are disulfide-bonded. A glycan (N-linked (GlcNAc...) asparagine) is linked at Asn-144. Position 177 (Ser-177) interacts with Mg(2+). Residue Glu-238 participates in Ca(2+) binding. The N-linked (GlcNAc...) asparagine glycan is linked to Asn-271. 3 residues coordinate Ca(2+): Phe-291, Glu-292, and Asp-307. Glu-333 contributes to the Mg(2+) binding site. Residues Asp-338, His-342, Asp-379, and His-380 each coordinate Zn(2+). A disordered region spans residues 425–449 (DGARPDVTESESGSPEYRQQSAVPL). Polar residues predominate over residues 434–446 (SESGSPEYRQQSA). His-454 lines the Zn(2+) pocket. Cys-489 and Cys-496 are disulfide-bonded. Asp-506 carries GPI-anchor amidated aspartate lipidation. Residues 507–535 (AAHPGRSVVPALLPLLAGTLLLLETATAP) constitute a propeptide, removed in mature form. Residues 513-529 (SVVPALLPLLAGTLLLL) form a helical membrane-spanning segment.

The protein belongs to the alkaline phosphatase family. In terms of assembly, homodimer. It depends on Mg(2+) as a cofactor. Zn(2+) is required as a cofactor. The cofactor is Ca(2+). In terms of tissue distribution, detected in placenta (at protein level).

It localises to the cell membrane. It carries out the reaction a phosphate monoester + H2O = an alcohol + phosphate. Alkaline phosphatase that can hydrolyze various phosphate compounds. The protein is Alkaline phosphatase, placental type of Homo sapiens (Human).